The following is a 318-amino-acid chain: Aspartate carbamoyltransferase catalytic subunit (318 aa).

Positions 54 and 55 each coordinate carbamoyl phosphate. An L-aspartate-binding site is contributed by Lys82. Carbamoyl phosphate-binding residues include Arg104, His134, and Gln137. The L-aspartate site is built by Arg174 and Arg230. Carbamoyl phosphate is bound by residues Gly271 and Pro272.

The protein belongs to the aspartate/ornithine carbamoyltransferase superfamily. ATCase family. As to quaternary structure, heterododecamer (2C3:3R2) of six catalytic PyrB chains organized as two trimers (C3), and six regulatory PyrI chains organized as three dimers (R2).

It catalyses the reaction carbamoyl phosphate + L-aspartate = N-carbamoyl-L-aspartate + phosphate + H(+). It participates in pyrimidine metabolism; UMP biosynthesis via de novo pathway; (S)-dihydroorotate from bicarbonate: step 2/3. Its function is as follows. Catalyzes the condensation of carbamoyl phosphate and aspartate to form carbamoyl aspartate and inorganic phosphate, the committed step in the de novo pyrimidine nucleotide biosynthesis pathway. This chain is Aspartate carbamoyltransferase catalytic subunit, found in Clavibacter michiganensis subsp. michiganensis (strain NCPPB 382).